A 331-amino-acid polypeptide reads, in one-letter code: Ketol-acid reductoisomerase (NADP(+)) (331 aa).

The KARI N-terminal Rossmann domain maps to 2–182 (ARMYYDADAQ…GGTRAGILET (181 aa)). NADP(+) contacts are provided by residues 25–28 (YGSQ), Ser51, Ser53, and 83–86 (DEVQ). His108 is a catalytic residue. Residue Gly134 participates in NADP(+) binding. Residues 183-328 (TFREETETDL…QELRSMFSWL (146 aa)) form the KARI C-terminal knotted domain. Asp191, Glu195, Glu227, and Glu231 together coordinate Mg(2+). Ser252 provides a ligand contact to substrate.

This sequence belongs to the ketol-acid reductoisomerase family. Requires Mg(2+) as cofactor.

It carries out the reaction (2R)-2,3-dihydroxy-3-methylbutanoate + NADP(+) = (2S)-2-acetolactate + NADPH + H(+). The enzyme catalyses (2R,3R)-2,3-dihydroxy-3-methylpentanoate + NADP(+) = (S)-2-ethyl-2-hydroxy-3-oxobutanoate + NADPH + H(+). Its pathway is amino-acid biosynthesis; L-isoleucine biosynthesis; L-isoleucine from 2-oxobutanoate: step 2/4. The protein operates within amino-acid biosynthesis; L-valine biosynthesis; L-valine from pyruvate: step 2/4. Its function is as follows. Involved in the biosynthesis of branched-chain amino acids (BCAA). Catalyzes an alkyl-migration followed by a ketol-acid reduction of (S)-2-acetolactate (S2AL) to yield (R)-2,3-dihydroxy-isovalerate. In the isomerase reaction, S2AL is rearranged via a Mg-dependent methyl migration to produce 3-hydroxy-3-methyl-2-ketobutyrate (HMKB). In the reductase reaction, this 2-ketoacid undergoes a metal-dependent reduction by NADPH to yield (R)-2,3-dihydroxy-isovalerate. This is Ketol-acid reductoisomerase (NADP(+)) from Thermosynechococcus vestitus (strain NIES-2133 / IAM M-273 / BP-1).